We begin with the raw amino-acid sequence, 400 residues long: GTPase Obg (400 aa).

The Obg domain occupies 1–159; that stretch reads MKFVDEVQIR…RTLKLELLLL (159 aa). Residues 160-333 form the OBG-type G domain; that stretch reads ADVGMLGLPN…VCYDILDLLD (174 aa). GTP contacts are provided by residues 166-173, 191-195, 213-216, 283-286, and 314-316; these read GLPNAGKS, FTTLV, DIPG, NKMD, and SAI. Residues serine 173 and threonine 193 each contribute to the Mg(2+) site.

Belongs to the TRAFAC class OBG-HflX-like GTPase superfamily. OBG GTPase family. As to quaternary structure, monomer. Requires Mg(2+) as cofactor.

Its subcellular location is the cytoplasm. Its function is as follows. An essential GTPase which binds GTP, GDP and possibly (p)ppGpp with moderate affinity, with high nucleotide exchange rates and a fairly low GTP hydrolysis rate. Plays a role in control of the cell cycle, stress response, ribosome biogenesis and in those bacteria that undergo differentiation, in morphogenesis control. In Aeromonas salmonicida (strain A449), this protein is GTPase Obg.